The chain runs to 381 residues: cAMP-dependent protein kinase type I-alpha regulatory subunit (381 aa).

At Met-1 the chain carries N-acetylmethionine. An N-acetylalanine; in cAMP-dependent protein kinase type I-alpha regulatory subunit, N-terminally processed modification is found at Ala-2. Residues 2–136 (ASGSMATSEE…ALAKAIEKNV (135 aa)) are dimerization and phosphorylation. Ser-3 carries the phosphoserine modification. Residues 73 to 96 (IRTDSREDEISPPPPNPVVKGRRR) form a disordered region. The residue at position 75 (Thr-75) is a Phosphothreonine. 2 positions are modified to phosphoserine: Ser-77 and Ser-83. The Pseudophosphorylation motif signature appears at 96–100 (RRGAI). Ser-101 carries the phosphoserine modification. 3',5'-cyclic AMP is bound by residues 137–254 (LFSH…SKVS), Glu-202, Arg-211, 255–381 (ILES…SLSV), Glu-326, and Arg-335. The residue at position 258 (Ser-258) is a Phosphoserine.

The protein belongs to the cAMP-dependent kinase regulatory chain family. In terms of assembly, the inactive holoenzyme is composed of two regulatory chains and two catalytic chains. Activation by cAMP releases the two active catalytic monomers and the regulatory dimer. Interacts with PRKACA and PRKACB. PRKAR1A also interacts with RFC2; the complex may be involved in cell survival. Interacts with AKAP4. Interacts with RARA; the interaction occurs in the presence of cAMP or FSH and regulates RARA transcriptional activity. Interacts with the phosphorylated form of PJA2. Interacts with PRKX; regulates this cAMP-dependent protein kinase. Interacts with CBFA2T3. Interacts with smAKAP; this interaction may target PRKAR1A to the plasma membrane. Interacts with AICDA. The pseudophosphorylation site binds to the substrate-binding region of the catalytic chain, resulting in the inhibition of its activity.

It localises to the cell membrane. Functionally, regulatory subunit of the cAMP-dependent protein kinases involved in cAMP signaling in cells. The polypeptide is cAMP-dependent protein kinase type I-alpha regulatory subunit (Prkar1a) (Mus musculus (Mouse)).